A 443-amino-acid chain; its full sequence is MSTTPATPKVGFVSLGCPKALVDSERILTQLRMEGYEVVPTYEDADVVVVNTCGFIDSAKAESLEVIGEAIKENGKVIVTGCMGVEEGSIRDVHPSVLSVTGPQQYEQVVNAVHEVVPPRQDHNPLIDLVPPQGVKLTPRHYAYLKISEGCNHSCSFCIIPSMRGKLVSRPVGEVLSEAERLVKAGVKEILVISQDTSAYGVDVKYKTDFWNGRPVKTRMLELCEALSSLGAWVRLHYVYPYPNVDDVIPLMAAGKILPYLDIPFQHASPKVLKSMKRPAFEDRTLARIKNWREQCPELVIRSTFIVGFPGETEEDFQYLLDWLTEAQLDRVGCFQYSPVEGAPANDLGLDEVPDDVKQERWDRFMAHQQAISAARLQQRIGKEIEVLIDEVEEQGSVGRSFFDAPEIDGSVFIDGDHGFKPGDKVRCRIVDADEYDMWAEPI.

The region spanning 8–118 (PKVGFVSLGC…VVNAVHEVVP (111 aa)) is the MTTase N-terminal domain. Residues Cys17, Cys53, Cys82, Cys151, Cys155, and Cys158 each coordinate [4Fe-4S] cluster. The Radical SAM core domain maps to 137 to 375 (LTPRHYAYLK…MAHQQAISAA (239 aa)). The TRAM domain occupies 378-443 (QQRIGKEIEV…DEYDMWAEPI (66 aa)).

Belongs to the methylthiotransferase family. RimO subfamily. Requires [4Fe-4S] cluster as cofactor.

It is found in the cytoplasm. It carries out the reaction L-aspartate(89)-[ribosomal protein uS12]-hydrogen + (sulfur carrier)-SH + AH2 + 2 S-adenosyl-L-methionine = 3-methylsulfanyl-L-aspartate(89)-[ribosomal protein uS12]-hydrogen + (sulfur carrier)-H + 5'-deoxyadenosine + L-methionine + A + S-adenosyl-L-homocysteine + 2 H(+). Catalyzes the methylthiolation of an aspartic acid residue of ribosomal protein uS12. This Pseudomonas entomophila (strain L48) protein is Ribosomal protein uS12 methylthiotransferase RimO.